Consider the following 339-residue polypeptide: Homeobox protein DBX2 (339 aa).

Residues 186-245 constitute a DNA-binding region (homeobox); it reads GILRRAVFSEDQRKALEKMFQKQKYISKTDRKKLAINLGLKESQVKIWFQNRRMKWRNSK. Residues 282-318 are disordered; the sequence is VPQQHSSPRWRENSPEPSERLIQESSGAPPPEANSLQ. Residues 290–303 show a composition bias toward basic and acidic residues; sequence RWRENSPEPSERLI.

It belongs to the H2.0 homeobox family.

The protein resides in the nucleus. In Homo sapiens (Human), this protein is Homeobox protein DBX2 (DBX2).